A 105-amino-acid chain; its full sequence is Thioredoxin (105 aa).

One can recognise a Thioredoxin domain in the interval 2–105 (VKQIESKYAF…KLEATINELI (104 aa)). Lys-3 carries the N6-acetyllysine modification. N6-succinyllysine is present on Lys-8. Residues Cys-32 and Cys-35 each act as nucleophile in the active site. Cys-32 and Cys-35 form a disulfide bridge. Lys-39 is subject to N6-acetyllysine. S-nitrosocysteine occurs at positions 62 and 69. At Cys-73 the chain carries S-nitrosocysteine; alternate. Lys-94 is subject to N6-acetyllysine; alternate. N6-succinyllysine; alternate is present on Lys-94.

This sequence belongs to the thioredoxin family. In terms of assembly, homodimer; disulfide-linked. Interacts with TXNIP through the redox-active site. Interacts with MAP3K5 and CASP3. Interacts with APEX1; the interaction stimulates the FOS/JUN AP-1 DNA-binding activity in a redox-dependent manner. In the fully reduced protein, both Cys-69 and Cys-73 are nitrosylated in response to nitric oxide (NO). When two disulfide bonds are present in the protein, only Cys-73 is nitrosylated. Cys-73 can serve as donor for nitrosylation of target proteins.

The protein localises to the nucleus. The protein resides in the cytoplasm. Its subcellular location is the secreted. Functionally, participates in various redox reactions through the reversible oxidation of its active center dithiol to a disulfide and catalyzes dithiol-disulfide exchange reactions. Plays a role in the reversible S-nitrosylation of cysteine residues in target proteins, and thereby contributes to the response to intracellular nitric oxide. Nitrosylates the active site Cys of CASP3 in response to nitric oxide (NO), and thereby inhibits caspase-3 activity. Induces the FOS/JUN AP-1 DNA binding activity in ionizing radiation (IR) cells through its oxidation/reduction status and stimulates AP-1 transcriptional activity. This Bos taurus (Bovine) protein is Thioredoxin (TXN).